The sequence spans 511 residues: D-alanine--D-alanyl carrier protein ligase (511 aa).

Residue 152–153 (TS) coordinates ATP. D-alanine is bound at residue Asp199. 294–299 (NAYGPT) serves as a coordination point for ATP. Val303 is a D-alanine binding site. ATP contacts are provided by residues Asp385, 397-400 (YGGR), and Lys499. D-alanine is bound at residue Lys499.

This sequence belongs to the ATP-dependent AMP-binding enzyme family. DltA subfamily.

The protein localises to the cytoplasm. The catalysed reaction is holo-[D-alanyl-carrier protein] + D-alanine + ATP = D-alanyl-[D-alanyl-carrier protein] + AMP + diphosphate. It participates in cell wall biogenesis; lipoteichoic acid biosynthesis. Functionally, catalyzes the first step in the D-alanylation of lipoteichoic acid (LTA), the activation of D-alanine and its transfer onto the D-alanyl carrier protein (Dcp) DltC. In an ATP-dependent two-step reaction, forms a high energy D-alanyl-AMP intermediate, followed by transfer of the D-alanyl residue as a thiol ester to the phosphopantheinyl prosthetic group of the Dcp. D-alanylation of LTA plays an important role in modulating the properties of the cell wall in Gram-positive bacteria, influencing the net charge of the cell wall. The chain is D-alanine--D-alanyl carrier protein ligase from Streptococcus agalactiae serotype V (strain ATCC BAA-611 / 2603 V/R).